Reading from the N-terminus, the 305-residue chain is Glutaminase (305 aa).

The substrate site is built by Ser-61, Asn-113, Glu-158, Asn-165, Tyr-189, Tyr-241, and Val-259.

The protein belongs to the glutaminase family. Homotetramer.

The catalysed reaction is L-glutamine + H2O = L-glutamate + NH4(+). In Clostridium botulinum (strain 657 / Type Ba4), this protein is Glutaminase.